The sequence spans 1255 residues: MTLLVITEQTIHSLCLDHGETNQIIAEIKQLEKPELLFSYITDAEPLATGEVFVGPDICGNCITHTFRVPDYVAKPPPYDSKRVYYPYSYTCLGFDSHPYDYLLTLDTKSIFQAIRKITLTRKLSIATQSDLDLIILKKLTTQSNCQSRVSSIWRQCVAACLAFEPQIQNNNSTQSPNLNNLVKRMFATLLKPIGRLPFYERRRNFVWEEEVSCPTILPLLLYSIQNLVTQFCAGVINRMEMILAFQYYLDCGVTAYQDEKLRLQKLIRNWLREGLAKFSKIAMPNWTVSGVISCTTVKPIMITTHEAREIKSAREAREASVPTYLLQYINHAIHKAISPYQTHQYWQATRVFANDGTYFASVAALTLNKAVRPRIEETTVKYPNSRYLTMNKEHIAVSLPNETDTNFGLACQFVKQFIPRLVTRLKNTNFQEEFIAFLTSSSSGKDFEDAAIATMTRTIQRVAKKRIVAAGLESRSYLNQQFIADECLAAAKLVGRTQIGRRQRAIAGVNNTRSLLGFPPMLMLKALLDMTGTTSSGKQMGNYLDLLIPLGLSPYANVIFNSADVDAMDASVQASVQQIMWHFVVYIALQLERTDYFAFTSGDEVIYELVEGKDSVATSIHMSGLARSCLRAMHLLQPQNCVLNDDIVGELVTREPTFPSGQPFTTVHHTFTLSNAIMGGTLRVTNLTNQPSTLLNLTVQGDDTRTINYGPKGCIEKCIDDQSSFVSDWGFKVSNETSSHTSEYLQQRVSCGTFVGYPDRVSLFAAERPKEGKTMKEKMSEIWSLVTDLGCRSRDPQRLVRLMYAIGVACCCRLTIRTERLVAEEFIASEVGRACCAEILVPKVAARADRGVMLRYHYPISALWLEEGGQLPPLATKRRDGTWTCFPSYYFQRGDSNRYWYWDVSLTEEKWITTVEMRSDWDSNNAIELIDDEILEAYATRYALAALGLNKTRQMERLRLSEESTIFDVEQLASGLNAYRNLSKIAISHRASERLKNAGVELPDSVLYSRHTQSRIQDAILKAQMTEKEEIEMSLYFFKDKGYLRSLRELVKSKSGDLAMIHRCEWGERVTILESSIFNVVSTTPLSMEVYPGSIMSFILCYTGLKGAHSGQLAGLVGLLQGKYGGGKISELQFSIAKKIYLTKPYLLNEFIIACGLGGEAELALKNALHAFEMLRGVEFSTVHTPRQFFFGVDSGVTLGNHLDYPNGFPGTRIELAAHLLLAMNFLSSNAQSCTGRSIRVRVPRGMWSRCTNF.

The RdRp catalytic domain occupies 548 to 756 (LIPLGLSPYA…QQRVSCGTFV (209 aa)).

It localises to the virion. It catalyses the reaction RNA(n) + a ribonucleoside 5'-triphosphate = RNA(n+1) + diphosphate. RNA-directed RNA polymerase that is involved in transcription and genome replication. Following infection, it catalyzes the synthesis of fully conservative plus strands. After core assembly, which consists in recruitment of one capped plus-strand for each genomic segments and polymerase complexes, the polymerase switches mode and catalyzes the synthesis of complementary minus-strands. The polypeptide is RNA-directed RNA polymerase (Oryza latifolia (Indian wild rice)).